Here is a 109-residue protein sequence, read N- to C-terminus: Small ribosomal subunit protein uS10 (109 aa).

This sequence belongs to the universal ribosomal protein uS10 family. In terms of assembly, part of the 30S ribosomal subunit.

Involved in the binding of tRNA to the ribosomes. In Koribacter versatilis (strain Ellin345), this protein is Small ribosomal subunit protein uS10.